We begin with the raw amino-acid sequence, 105 residues long: Nucleoid-associated protein OCAR_7544/OCA5_c05960 (105 aa).

The protein belongs to the YbaB/EbfC family. In terms of assembly, homodimer.

The protein resides in the cytoplasm. It localises to the nucleoid. Its function is as follows. Binds to DNA and alters its conformation. May be involved in regulation of gene expression, nucleoid organization and DNA protection. The chain is Nucleoid-associated protein OCAR_7544/OCA5_c05960 from Afipia carboxidovorans (strain ATCC 49405 / DSM 1227 / KCTC 32145 / OM5) (Oligotropha carboxidovorans).